Here is a 198-residue protein sequence, read N- to C-terminus: Superoxide dismutase [Mn], mitochondrial (198 aa).

Residue histidine 26 participates in Mn(2+) binding. Tyrosine 34 is modified (3'-nitrotyrosine). Residues lysine 44 and lysine 51 each carry the N6-acetyllysine; alternate modification. An N6-succinyllysine; alternate mark is found at lysine 44 and lysine 51. Histidine 74 serves as a coordination point for Mn(2+). Lysine 90 carries the N6-acetyllysine modification. Residues lysine 98 and lysine 106 each carry the N6-acetyllysine; alternate modification. An N6-succinyllysine; alternate mark is found at lysine 98 and lysine 106. Residues aspartate 159 and histidine 163 each coordinate Mn(2+). Position 178 is an N6-acetyllysine (lysine 178).

Belongs to the iron/manganese superoxide dismutase family. As to quaternary structure, homotetramer. Requires Mn(2+) as cofactor. In terms of processing, nitrated under oxidative stress. Nitration coupled with oxidation inhibits the catalytic activity. Post-translationally, acetylation at Lys-98 decreases enzymatic activity. Deacetylated by SIRT3 upon exposure to ionizing radiations or after long fasting. Polyubiquitinated; leading to proteasomal degradation. Deubiquitinated by USP36 which increases protein stability.

The protein resides in the mitochondrion matrix. It carries out the reaction 2 superoxide + 2 H(+) = H2O2 + O2. In terms of biological role, destroys superoxide anion radicals which are normally produced within the cells and which are toxic to biological systems. The polypeptide is Superoxide dismutase [Mn], mitochondrial (SOD2) (Pan troglodytes (Chimpanzee)).